Here is an 856-residue protein sequence, read N- to C-terminus: Increased rDNA silencing protein 4 (856 aa).

Disordered regions lie at residues 1 to 204 (MSAS…EPKS), 230 to 563 (KQEE…PTPE), and 589 to 672 (TSLE…DEDL). Composition is skewed to low complexity over residues 12 to 42 (GPAS…ATLA), 67 to 84 (VPTP…RTVG), and 111 to 130 (SRVV…AGRT). The segment covering 152–162 (HVEERANDHAP) has biased composition (basic and acidic residues). Residues 194-204 (ASAKPSSEPKS) are compositionally biased toward low complexity. A compositionally biased stretch (basic residues) spans 239 to 254 (KKKKKKKPRPASKTQH). Polar residues-rich tracts occupy residues 255–275 (HQTL…ENQC) and 303–315 (SLST…SSTG). Positions 329–347 (GETRNRNGDVRDKPSREGG) are enriched in basic and acidic residues. Polar residues-rich tracts occupy residues 396–410 (PVSQ…TIIS), 451–468 (RVVS…QSAE), and 478–488 (RNSTSSDETFV). Basic and acidic residues predominate over residues 503-514 (KELERVRPRLDR). The segment covering 517 to 535 (TSTSSRASRVSTPASVRSP) has biased composition (low complexity). Residues 603 to 620 (RRGHRHHHLPHPHLRHRT) are compositionally biased toward basic residues. The segment covering 644–654 (PSRQTEHTQPA) has biased composition (polar residues). In terms of domain architecture, EH spans 743-832 (DSLGQVDLSR…EGVWESAMDR (90 aa)).

Belongs to the IRS4 family.

Its function is as follows. Positive regulator of phosphatidylinositol 4,5-bisphosphate turnover and negatively regulates signaling through the cell integrity pathway. Involved in rDNA silencing. This is Increased rDNA silencing protein 4 (irs-4) from Neurospora crassa (strain ATCC 24698 / 74-OR23-1A / CBS 708.71 / DSM 1257 / FGSC 987).